Here is a 556-residue protein sequence, read N- to C-terminus: Cytochrome P450 4g1 (556 aa).

2 residues coordinate heme: Glu-356 and Cys-497.

It belongs to the cytochrome P450 family. It depends on heme as a cofactor.

Its subcellular location is the endoplasmic reticulum membrane. It localises to the microsome membrane. In terms of biological role, may be involved in the metabolism of insect hormones and in the breakdown of synthetic insecticides. The sequence is that of Cytochrome P450 4g1 (Cyp4g1) from Drosophila melanogaster (Fruit fly).